A 298-amino-acid chain; its full sequence is GTPase Era (298 aa).

The Era-type G domain maps to 3-170; it reads KSGFVAILGR…VQLLKDNLEE (168 aa). The tract at residues 11–18 is G1; sequence GRPNVGKS. 11–18 is a binding site for GTP; the sequence is GRPNVGKS. Residues 37-41 are G2; that stretch reads QSTRN. Residues 58 to 61 are G3; that stretch reads DTPG. Residues 58 to 62 and 120 to 123 each bind GTP; these read DTPGI and NKID. The interval 120–123 is G4; the sequence is NKID. The interval 149–151 is G5; it reads ISA. Residues 201–279 form the KH type-2 domain; the sequence is TQQEVPHSVA…YLETWVKVKK (79 aa).

Belongs to the TRAFAC class TrmE-Era-EngA-EngB-Septin-like GTPase superfamily. Era GTPase family. As to quaternary structure, monomer.

Its subcellular location is the cytoplasm. It localises to the cell membrane. In terms of biological role, an essential GTPase that binds both GDP and GTP, with rapid nucleotide exchange. Plays a role in 16S rRNA processing and 30S ribosomal subunit biogenesis and possibly also in cell cycle regulation and energy metabolism. This chain is GTPase Era, found in Streptococcus equi subsp. zooepidemicus (strain H70).